Here is a 216-residue protein sequence, read N- to C-terminus: Ras-related protein Rab-5C (216 aa).

GTP is bound by residues Ser30, Ala31, Gly33, Lys34, Ser35, Ser36, His47, Glu48, Thr53, and Gly79. Ser35 contributes to the Mg(2+) binding site. 2 consecutive short sequence motifs (switch) follow at residues 45 to 57 (QFHE…IGAA) and 78 to 94 (AGQE…YRGA). Residue Thr53 participates in Mg(2+) binding. A Phosphoserine; by LRRK2 modification is found at Ser85. Residues Asn134, Lys135, Asp137, Ala165, and Lys166 each contribute to the GTP site. The interval 185–216 (NEPQNATGAPGRNRGVDLQENNPASRSQCCSN) is disordered. Positions 203-216 (QENNPASRSQCCSN) are enriched in polar residues. 2 S-geranylgeranyl cysteine lipidation sites follow: Cys213 and Cys214.

Belongs to the small GTPase superfamily. Rab family. In terms of assembly, interacts with EEA1. Interacts with INCA1. Interacts with GDI1, GDI2, CHML and CHM; phosphorylation at Ser-85 disrupts this interaction. Requires Mg(2+) as cofactor. In terms of processing, phosphorylation of Ser-85 in the switch II region by LRRK2 prevents the association of RAB regulatory proteins, including CHM, CHML and RAB GDP dissociation inhibitors GDI1 and GDI2. Post-translationally, (Microbial infection) Glycosylated on arginine residues by S.typhimurium protein Ssek3.

It is found in the cell membrane. The protein localises to the early endosome membrane. It localises to the melanosome. The enzyme catalyses GTP + H2O = GDP + phosphate + H(+). With respect to regulation, regulated by guanine nucleotide exchange factors (GEFs) which promote the exchange of bound GDP for free GTP. Regulated by GTPase activating proteins (GAPs) which increase the GTP hydrolysis activity. Inhibited by GDP dissociation inhibitors (GDIs). Its function is as follows. The small GTPases Rab are key regulators of intracellular membrane trafficking, from the formation of transport vesicles to their fusion with membranes. Rabs cycle between an inactive GDP-bound form and an active GTP-bound form that is able to recruit to membranes different sets of downstream effectors directly responsible for vesicle formation, movement, tethering and fusion. The sequence is that of Ras-related protein Rab-5C from Homo sapiens (Human).